The following is a 121-amino-acid chain: MARIAGVNIPNHQHTEIGLTAIFGIGRTRARSICVASGVAFSKKVKDLTDADLEKLREEVGKFVVEGDLRREVTMNIKRLMDLGCYRGVRHRKGLPMRGQRTRTNARTRKGPRRAAQALKK.

Residues 92–121 are disordered; sequence RKGLPMRGQRTRTNARTRKGPRRAAQALKK.

The protein belongs to the universal ribosomal protein uS13 family. Part of the 30S ribosomal subunit. Forms a loose heterodimer with protein S19. Forms two bridges to the 50S subunit in the 70S ribosome.

Its function is as follows. Located at the top of the head of the 30S subunit, it contacts several helices of the 16S rRNA. In the 70S ribosome it contacts the 23S rRNA (bridge B1a) and protein L5 of the 50S subunit (bridge B1b), connecting the 2 subunits; these bridges are implicated in subunit movement. Contacts the tRNAs in the A and P-sites. The chain is Small ribosomal subunit protein uS13 from Burkholderia thailandensis (strain ATCC 700388 / DSM 13276 / CCUG 48851 / CIP 106301 / E264).